The primary structure comprises 253 residues: MNILITNDDGINAPGIIALAKEISKEHKVTIVAPKDQKSASSHSISIHSPIKIKEEFIEGLDCKAYSVSGTPADCTQVGLSFLKENIELVISGINKGPNVGTDILYSGTVSAAIEGTIYGIPSIAVSMDVEYGKDDEDYSKAVKWAIKVLDIAKEEYLKSDVVLNLNIPNFNERDIKGIKVCKIGRSTYKTEYILLESNEEGDLYTTKGTRNAIKEEESDLYYLYQGYVTLTPLHFDFTDFAILSDVTKIFEK.

4 residues coordinate a divalent metal cation: Asp8, Asp9, Ser39, and Asn95.

It belongs to the SurE nucleotidase family. Requires a divalent metal cation as cofactor.

It localises to the cytoplasm. The catalysed reaction is a ribonucleoside 5'-phosphate + H2O = a ribonucleoside + phosphate. Nucleotidase that shows phosphatase activity on nucleoside 5'-monophosphates. In Clostridium beijerinckii (strain ATCC 51743 / NCIMB 8052) (Clostridium acetobutylicum), this protein is 5'-nucleotidase SurE.